A 320-amino-acid polypeptide reads, in one-letter code: Pyrroline-5-carboxylate reductase 2 (320 aa).

Ser2 bears the N-acetylserine mark. NADP(+) is bound by residues 6–11 and Ser34; that span reads IGAGQL. NADPH is bound by residues Ala8, Gln10, Leu11, Ser34, Glu36, Asn56, Val70, Lys71, and Ala97. NADP(+) is bound by residues Asn56, 69–72, and 95–97; these read AVKP and CAA. An L-proline-binding site is contributed by Glu164. NADPH is bound at residue Asn230. L-proline contacts are provided by Ala237 and Thr238. The tract at residues 293-320 is disordered; it reads ESPTVSTLAPPSSGKLLTRNPAQGSKRE. At Ser304 the chain carries Phosphoserine.

This sequence belongs to the pyrroline-5-carboxylate reductase family. Homodecamer; composed of 5 homodimers. Interacts with LTO1.

It is found in the cytoplasm. It localises to the mitochondrion. The enzyme catalyses L-proline + NADP(+) = (S)-1-pyrroline-5-carboxylate + NADPH + 2 H(+). It carries out the reaction L-proline + NAD(+) = (S)-1-pyrroline-5-carboxylate + NADH + 2 H(+). It functions in the pathway amino-acid biosynthesis; L-proline biosynthesis; L-proline from L-glutamate 5-semialdehyde: step 1/1. Oxidoreductase that catalyzes the last step in proline biosynthesis, which corresponds to the reduction of pyrroline-5-carboxylate to L-proline using NAD(P)H. At physiologic concentrations, has higher specific activity in the presence of NADH. Involved in cellular response to oxidative stress. In some cell types, such as erythrocytes, its primary function may be the generation of NADP(+). The polypeptide is Pyrroline-5-carboxylate reductase 2 (Rattus norvegicus (Rat)).